Reading from the N-terminus, the 156-residue chain is Lipoprotein signal peptidase (156 aa).

Transmembrane regions (helical) follow at residues phenylalanine 5–valine 25, tyrosine 64–leucine 84, and isoleucine 89–glycine 109. Residues aspartate 113 and aspartate 130 contribute to the active site. A helical membrane pass occupies residues asparagine 122–isoleucine 142.

This sequence belongs to the peptidase A8 family.

The protein localises to the cell inner membrane. The catalysed reaction is Release of signal peptides from bacterial membrane prolipoproteins. Hydrolyzes -Xaa-Yaa-Zaa-|-(S,diacylglyceryl)Cys-, in which Xaa is hydrophobic (preferably Leu), and Yaa (Ala or Ser) and Zaa (Gly or Ala) have small, neutral side chains.. The protein operates within protein modification; lipoprotein biosynthesis (signal peptide cleavage). This protein specifically catalyzes the removal of signal peptides from prolipoproteins. The chain is Lipoprotein signal peptidase from Campylobacter jejuni subsp. doylei (strain ATCC BAA-1458 / RM4099 / 269.97).